Consider the following 173-residue polypeptide: NADH-ubiquinone oxidoreductase chain 6 (173 aa).

A run of 5 helical transmembrane segments spans residues 1–21, 27–47, 48–68, 87–107, and 139–159; these read MTYF…AVAS, YGVV…LSLG, ASFV…VVFV, VIGY…IGGF, and WGAG…FVVL.

It belongs to the complex I subunit 6 family.

The protein resides in the mitochondrion membrane. The enzyme catalyses a ubiquinone + NADH + 5 H(+)(in) = a ubiquinol + NAD(+) + 4 H(+)(out). In terms of biological role, core subunit of the mitochondrial membrane respiratory chain NADH dehydrogenase (Complex I) that is believed to belong to the minimal assembly required for catalysis. Complex I functions in the transfer of electrons from NADH to the respiratory chain. The immediate electron acceptor for the enzyme is believed to be ubiquinone. The chain is NADH-ubiquinone oxidoreductase chain 6 (MT-ND6) from Brachyramphus brevirostris (Kittlitz's murrelet).